The chain runs to 205 residues: Putative lipoprotein LppC (205 aa).

Positions 1-27 are cleaved as a signal peptide; sequence MESPMTSTLHRTPLATAGLALVVALGG. C28 carries N-palmitoyl cysteine lipidation. C28 carries S-diacylglycerol cysteine lipidation. The tract at residues 126–145 is disordered; it reads GSTADGQTPAGGHSVPNSGG.

The protein belongs to the UPF0098 family.

The protein localises to the cell membrane. This chain is Putative lipoprotein LppC (lppC), found in Mycobacterium tuberculosis (strain CDC 1551 / Oshkosh).